Consider the following 166-residue polypeptide: RNA pyrophosphohydrolase (166 aa).

The Nudix hydrolase domain maps to Pro-8–Lys-158. The short motif at Gly-47 to Asn-68 is the Nudix box element.

It belongs to the Nudix hydrolase family. RppH subfamily. The cofactor is a divalent metal cation.

Functionally, accelerates the degradation of transcripts by removing pyrophosphate from the 5'-end of triphosphorylated RNA, leading to a more labile monophosphorylated state that can stimulate subsequent ribonuclease cleavage. The sequence is that of RNA pyrophosphohydrolase from Afipia carboxidovorans (strain ATCC 49405 / DSM 1227 / KCTC 32145 / OM5) (Oligotropha carboxidovorans).